The following is a 106-amino-acid chain: Urease subunit beta (106 aa).

It belongs to the urease beta subunit family. As to quaternary structure, heterotrimer of UreA (gamma), UreB (beta) and UreC (alpha) subunits. Three heterotrimers associate to form the active enzyme.

The protein resides in the cytoplasm. The enzyme catalyses urea + 2 H2O + H(+) = hydrogencarbonate + 2 NH4(+). The protein operates within nitrogen metabolism; urea degradation; CO(2) and NH(3) from urea (urease route): step 1/1. In Prochlorococcus marinus subsp. pastoris (strain CCMP1986 / NIES-2087 / MED4), this protein is Urease subunit beta.